A 100-amino-acid chain; its full sequence is MAYYLYMLRCEDGSIYTGVAKDYLKRYEEHLSAKGAKYTKSHKVVKIERVFLCDSRSIACSLESEIKKYIKKKKENIISKPDSFIKDIENVRKIKIKKIF.

In terms of domain architecture, GIY-YIG spans 1–77 (MAYYLYMLRC…KYIKKKKENI (77 aa)).

This sequence belongs to the UPF0213 family.

In Fusobacterium nucleatum subsp. nucleatum (strain ATCC 25586 / DSM 15643 / BCRC 10681 / CIP 101130 / JCM 8532 / KCTC 2640 / LMG 13131 / VPI 4355), this protein is UPF0213 protein FN1575.